A 33-amino-acid chain; its full sequence is Large ribosomal subunit protein uL24 (33 aa).

The protein belongs to the universal ribosomal protein uL24 family. As to quaternary structure, component of the large ribosomal subunit.

The protein localises to the cytoplasm. Functionally, component of the large ribosomal subunit. The ribosome is a large ribonucleoprotein complex responsible for the synthesis of proteins in the cell. The polypeptide is Large ribosomal subunit protein uL24 (rpl26) (Xenopus laevis (African clawed frog)).